The sequence spans 192 residues: Intraflagellar transport protein 22 (192 aa).

Residues 12–19 and 62–69 each bind GTP; these read GPQRTGKT and WDVSGSVQ.

This sequence belongs to the small GTPase superfamily. Rab family. Component of the IFT complex B, composed of IFT88, IFT70, IFT52, IFT46, IFT27, IFT25 and IFT22.

Its subcellular location is the cell projection. It localises to the cilium. The protein resides in the flagellum. Its function is as follows. Component of the intraflagellar transport (IFT) complex B. Functions in regulating the cellular pool size of both complex A and complex B and thus plays a critical role in determining the cellular availability of IFT particles. The polypeptide is Intraflagellar transport protein 22 (FAP9) (Chlamydomonas reinhardtii (Chlamydomonas smithii)).